Consider the following 634-residue polypeptide: Glutamyl-tRNA(Gln) amidotransferase subunit E (634 aa).

Belongs to the GatB/GatE family. GatE subfamily. In terms of assembly, heterodimer of GatD and GatE.

The enzyme catalyses L-glutamyl-tRNA(Gln) + L-glutamine + ATP + H2O = L-glutaminyl-tRNA(Gln) + L-glutamate + ADP + phosphate + H(+). In terms of biological role, allows the formation of correctly charged Gln-tRNA(Gln) through the transamidation of misacylated Glu-tRNA(Gln) in organisms which lack glutaminyl-tRNA synthetase. The reaction takes place in the presence of glutamine and ATP through an activated gamma-phospho-Glu-tRNA(Gln). The GatDE system is specific for glutamate and does not act on aspartate. This Sulfolobus acidocaldarius (strain ATCC 33909 / DSM 639 / JCM 8929 / NBRC 15157 / NCIMB 11770) protein is Glutamyl-tRNA(Gln) amidotransferase subunit E.